Reading from the N-terminus, the 268-residue chain is Undecaprenyl-diphosphatase (268 aa).

A run of 8 helical transmembrane segments spans residues 8–28 (VILG…TGHL), 41–61 (AFWD…IVGL), 83–103 (FVIG…VAGK), 108–128 (VLFN…ILLW), 144–164 (FPLL…IPGV), 184–204 (AAEF…AYDF), 218–238 (IVAI…KTFL), and 246–266 (FVVF…ALAL).

This sequence belongs to the UppP family.

The protein resides in the cell inner membrane. The enzyme catalyses di-trans,octa-cis-undecaprenyl diphosphate + H2O = di-trans,octa-cis-undecaprenyl phosphate + phosphate + H(+). Functionally, catalyzes the dephosphorylation of undecaprenyl diphosphate (UPP). Confers resistance to bacitracin. The sequence is that of Undecaprenyl-diphosphatase from Bradyrhizobium diazoefficiens (strain JCM 10833 / BCRC 13528 / IAM 13628 / NBRC 14792 / USDA 110).